Reading from the N-terminus, the 572-residue chain is Neuronal acetylcholine receptor subunit alpha-9-I (572 aa).

The N-terminal stretch at 1-19 (MKTVVLLTWISCWIDVCTS) is a signal peptide. Residues 20–232 (AQGRYAQKLL…YTLHLKRRSL (213 aa)) lie on the Extracellular side of the membrane. Residue Asn-51 is glycosylated (N-linked (GlcNAc...) asparagine). A disulfide bridge connects residues Cys-149 and Cys-163. N-linked (GlcNAc...) asparagine glycosylation occurs at Asn-164. A disulfide bridge links Cys-213 with Cys-214. 3 consecutive transmembrane segments (helical) span residues 233-253 (FYIF…PLGF), 263-283 (VSLG…VAES), and 297-317 (YIAT…IMNI). The Cytoplasmic portion of the chain corresponds to 318-550 (HFCGAEAKPV…WKKVAKVMDR (233 aa)). Residues 405 to 458 (GHLQNHHSTHQNHLDNCRYANGGHRDDHYSNRSNQNHHSNRSQTSKGEGGEEKR) form a disordered region. Residues 435 to 447 (NRSNQNHHSNRSQ) show a composition bias toward low complexity. Residues 551-571 (FFMWIFFIMVFLMSILIIGKA) traverse the membrane as a helical segment.

The protein belongs to the ligand-gated ion channel (TC 1.A.9) family. Acetylcholine receptor (TC 1.A.9.1) subfamily. Expressed in the liver, olfactory mucosa, pituitary gland, hair cells of the saccule and spleen.

It is found in the postsynaptic cell membrane. It localises to the cell membrane. This Oncorhynchus mykiss (Rainbow trout) protein is Neuronal acetylcholine receptor subunit alpha-9-I (nachra9).